The following is a 499-amino-acid chain: Catalase (499 aa).

The disordered stretch occupies residues 1–25 (MTDRPIMTTSAGAPIPDNQNSLTAG). Residues 7-23 (MTTSAGAPIPDNQNSLT) show a composition bias toward polar residues. Catalysis depends on residues H55 and N127. Y337 is a binding site for heme.

It belongs to the catalase family. As to quaternary structure, homotetramer. Heme is required as a cofactor.

Its subcellular location is the periplasm. The catalysed reaction is 2 H2O2 = O2 + 2 H2O. Functionally, decomposes hydrogen peroxide into water and oxygen; serves to protect cells from the toxic effects of hydrogen peroxide. This is Catalase (katA) from Brucella abortus biovar 1 (strain 9-941).